The following is a 127-amino-acid chain: Glycine cleavage system H protein (127 aa).

In terms of domain architecture, Lipoyl-binding spans 22–104 (EVVIGITHFA…YEGAWMVKVE (83 aa)). The residue at position 63 (Lys-63) is an N6-lipoyllysine.

Belongs to the GcvH family. In terms of assembly, the glycine cleavage system is composed of four proteins: P, T, L and H. The cofactor is (R)-lipoate.

Its function is as follows. The glycine cleavage system catalyzes the degradation of glycine. The H protein shuttles the methylamine group of glycine from the P protein to the T protein. Is also involved in protein lipoylation via its role as an octanoyl/lipoyl carrier protein intermediate. The polypeptide is Glycine cleavage system H protein (Bacillus cereus (strain B4264)).